Consider the following 517-residue polypeptide: ATP synthase subunit alpha (517 aa).

Residue 174-181 (GDRQTGKT) participates in ATP binding.

This sequence belongs to the ATPase alpha/beta chains family. In terms of assembly, F-type ATPases have 2 components, CF(1) - the catalytic core - and CF(0) - the membrane proton channel. CF(1) has five subunits: alpha(3), beta(3), gamma(1), delta(1), epsilon(1). CF(0) has three main subunits: a(1), b(2) and c(9-12). The alpha and beta chains form an alternating ring which encloses part of the gamma chain. CF(1) is attached to CF(0) by a central stalk formed by the gamma and epsilon chains, while a peripheral stalk is formed by the delta and b chains.

It localises to the cell inner membrane. The catalysed reaction is ATP + H2O + 4 H(+)(in) = ADP + phosphate + 5 H(+)(out). Its function is as follows. Produces ATP from ADP in the presence of a proton gradient across the membrane. The alpha chain is a regulatory subunit. The sequence is that of ATP synthase subunit alpha from Polaromonas sp. (strain JS666 / ATCC BAA-500).